Reading from the N-terminus, the 194-residue chain is Adenylate kinase (194 aa).

10 to 15 (GAGKGT) contributes to the ATP binding site. An NMP region spans residues 30–59 (STGDMLRAAVAQQSEIGKRAKAVMDAGQLV). AMP is bound by residues Thr31, Arg36, 57-59 (QLV), 85-88 (GYPR), and Gln92. Residues 126 to 142 (SRVAETIAKGGQVRSDD) are LID. Arg127 contacts ATP. AMP is bound by residues Arg139 and Arg150. Ala178 contributes to the ATP binding site.

This sequence belongs to the adenylate kinase family. As to quaternary structure, monomer.

The protein localises to the cytoplasm. It catalyses the reaction AMP + ATP = 2 ADP. The protein operates within purine metabolism; AMP biosynthesis via salvage pathway; AMP from ADP: step 1/1. Catalyzes the reversible transfer of the terminal phosphate group between ATP and AMP. Plays an important role in cellular energy homeostasis and in adenine nucleotide metabolism. The polypeptide is Adenylate kinase (Brucella anthropi (strain ATCC 49188 / DSM 6882 / CCUG 24695 / JCM 21032 / LMG 3331 / NBRC 15819 / NCTC 12168 / Alc 37) (Ochrobactrum anthropi)).